The following is a 395-amino-acid chain: S-adenosylmethionine synthase (395 aa).

Residue H14 coordinates ATP. Mg(2+) is bound at residue D16. E42 provides a ligand contact to K(+). Residues E55 and Q98 each coordinate L-methionine. Residues 98 to 108 (QSPDIAMGVDK) form a flexible loop region. ATP-binding positions include 175 to 177 (DGK), 242 to 243 (RF), D251, 257 to 258 (RK), A274, and K278. D251 contributes to the L-methionine binding site. K282 provides a ligand contact to L-methionine.

It belongs to the AdoMet synthase family. In terms of assembly, homotetramer; dimer of dimers. Mg(2+) is required as a cofactor. It depends on K(+) as a cofactor.

Its subcellular location is the cytoplasm. The catalysed reaction is L-methionine + ATP + H2O = S-adenosyl-L-methionine + phosphate + diphosphate. It participates in amino-acid biosynthesis; S-adenosyl-L-methionine biosynthesis; S-adenosyl-L-methionine from L-methionine: step 1/1. In terms of biological role, catalyzes the formation of S-adenosylmethionine (AdoMet) from methionine and ATP. The overall synthetic reaction is composed of two sequential steps, AdoMet formation and the subsequent tripolyphosphate hydrolysis which occurs prior to release of AdoMet from the enzyme. The sequence is that of S-adenosylmethionine synthase from Thermosipho melanesiensis (strain DSM 12029 / CIP 104789 / BI429).